A 203-amino-acid polypeptide reads, in one-letter code: MIGRLRGIIIEKQPPLVLIEVGGVGYEVHMPMTCFYELPEAGQEAIVFTHFVVREDAQLLYGFNNKQERTLFKELIKTNGVGPKLALAILSGMSAQQFVNAVEREEVGALVKLPGIGKKTAERLIVEMKDRFKGLHGDLFTPAADLVLTSPASPATDDAEQEAVAALVALGYKPQEASRMVSKIARPDASSETLIREALHAAL.

The segment at 1–64 (MIGRLRGIII…EDAQLLYGFN (64 aa)) is domain I. The tract at residues 65–142 (NKQERTLFKE…KGLHGDLFTP (78 aa)) is domain II. The tract at residues 143–154 (AADLVLTSPASP) is flexible linker. The tract at residues 155–203 (ATDDAEQEAVAALVALGYKPQEASRMVSKIARPDASSETLIREALHAAL) is domain III.

This sequence belongs to the RuvA family. As to quaternary structure, homotetramer. Forms an RuvA(8)-RuvB(12)-Holliday junction (HJ) complex. HJ DNA is sandwiched between 2 RuvA tetramers; dsDNA enters through RuvA and exits via RuvB. An RuvB hexamer assembles on each DNA strand where it exits the tetramer. Each RuvB hexamer is contacted by two RuvA subunits (via domain III) on 2 adjacent RuvB subunits; this complex drives branch migration. In the full resolvosome a probable DNA-RuvA(4)-RuvB(12)-RuvC(2) complex forms which resolves the HJ.

The protein resides in the cytoplasm. In terms of biological role, the RuvA-RuvB-RuvC complex processes Holliday junction (HJ) DNA during genetic recombination and DNA repair, while the RuvA-RuvB complex plays an important role in the rescue of blocked DNA replication forks via replication fork reversal (RFR). RuvA specifically binds to HJ cruciform DNA, conferring on it an open structure. The RuvB hexamer acts as an ATP-dependent pump, pulling dsDNA into and through the RuvAB complex. HJ branch migration allows RuvC to scan DNA until it finds its consensus sequence, where it cleaves and resolves the cruciform DNA. The sequence is that of Holliday junction branch migration complex subunit RuvA from Escherichia fergusonii (strain ATCC 35469 / DSM 13698 / CCUG 18766 / IAM 14443 / JCM 21226 / LMG 7866 / NBRC 102419 / NCTC 12128 / CDC 0568-73).